Here is a 474-residue protein sequence, read N- to C-terminus: ABHD16B (474 aa).

An AB hydrolase-1 domain is found at 175–293; that stretch reads VICCEGNAGF…MPQSWKGLVV (119 aa). Catalysis depends on charge relay system residues Ser-248, Asp-323, and His-423.

It belongs to the AB hydrolase superfamily. ABHD16 family.

The enzyme catalyses a 1,2-diacyl-sn-glycero-3-phospho-L-serine + H2O = a 2-acyl-sn-glycero-3-phospho-L-serine + a fatty acid + H(+). It carries out the reaction a 1-acylglycerol + H2O = glycerol + a fatty acid + H(+). The catalysed reaction is 1-(9Z-octadecenoyl)-glycerol + H2O = glycerol + (9Z)-octadecenoate + H(+). Functionally, hydrolyzes the sn-1 position of glycerophospholipids with high specificity towards phosphatidylserine (PS), PS-PLA1 enzyme. Also hydrolyzes the acyl chain of glycerolipids with a preference for the monoacylglycerol (MAG) 1-acylglycerol, MAG lipase. Plays a regulatory role in cellular lipid homeostasis by modulating genes involved in neutral lipid degradation and in phospholipid synthesis and composition. This Rattus norvegicus (Rat) protein is ABHD16B.